Here is a 219-residue protein sequence, read N- to C-terminus: NAD(P)H-quinone oxidoreductase subunit I (219 aa).

2 4Fe-4S ferredoxin-type domains span residues 55–84 (GRIH…VDWV) and 95–124 (RNYS…MTEE). The [4Fe-4S] cluster site is built by Cys64, Cys67, Cys70, Cys74, Cys104, Cys107, Cys110, and Cys114. Residues 192–219 (LKAAGSMKAAEDERESSSSASNMEESAG) form a disordered region. A compositionally biased stretch (low complexity) spans 208–219 (SSSASNMEESAG).

This sequence belongs to the complex I 23 kDa subunit family. As to quaternary structure, NDH-1 is composed of at least 11 different subunits. The cofactor is [4Fe-4S] cluster.

The protein resides in the cellular thylakoid membrane. The catalysed reaction is a plastoquinone + NADH + (n+1) H(+)(in) = a plastoquinol + NAD(+) + n H(+)(out). It carries out the reaction a plastoquinone + NADPH + (n+1) H(+)(in) = a plastoquinol + NADP(+) + n H(+)(out). In terms of biological role, NDH-1 shuttles electrons from an unknown electron donor, via FMN and iron-sulfur (Fe-S) centers, to quinones in the respiratory and/or the photosynthetic chain. The immediate electron acceptor for the enzyme in this species is believed to be plastoquinone. Couples the redox reaction to proton translocation, and thus conserves the redox energy in a proton gradient. The sequence is that of NAD(P)H-quinone oxidoreductase subunit I from Synechococcus sp. (strain CC9311).